A 317-amino-acid polypeptide reads, in one-letter code: Transaldolase (317 aa).

K132 acts as the Schiff-base intermediate with substrate in catalysis.

This sequence belongs to the transaldolase family. Type 1 subfamily. Homodimer.

It localises to the cytoplasm. It carries out the reaction D-sedoheptulose 7-phosphate + D-glyceraldehyde 3-phosphate = D-erythrose 4-phosphate + beta-D-fructose 6-phosphate. It functions in the pathway carbohydrate degradation; pentose phosphate pathway; D-glyceraldehyde 3-phosphate and beta-D-fructose 6-phosphate from D-ribose 5-phosphate and D-xylulose 5-phosphate (non-oxidative stage): step 2/3. Functionally, transaldolase is important for the balance of metabolites in the pentose-phosphate pathway. This Yersinia enterocolitica serotype O:8 / biotype 1B (strain NCTC 13174 / 8081) protein is Transaldolase.